Consider the following 401-residue polypeptide: Glutamyl-tRNA reductase (401 aa).

Substrate is bound by residues 49–52 (TCNR), S92, 97–99 (END), and Q103. C50 (nucleophile) is an active-site residue. Position 171 to 176 (171 to 176 (GNGKMA)) interacts with NADP(+).

The protein belongs to the glutamyl-tRNA reductase family. Homodimer.

The catalysed reaction is (S)-4-amino-5-oxopentanoate + tRNA(Glu) + NADP(+) = L-glutamyl-tRNA(Glu) + NADPH + H(+). Its pathway is porphyrin-containing compound metabolism; protoporphyrin-IX biosynthesis; 5-aminolevulinate from L-glutamyl-tRNA(Glu): step 1/2. In terms of biological role, catalyzes the NADPH-dependent reduction of glutamyl-tRNA(Glu) to glutamate 1-semialdehyde (GSA). This chain is Glutamyl-tRNA reductase, found in Picrophilus torridus (strain ATCC 700027 / DSM 9790 / JCM 10055 / NBRC 100828 / KAW 2/3).